Reading from the N-terminus, the 205-residue chain is Small ribosomal subunit protein uS4 (205 aa).

Positions 1 to 16 (MSKRESSKYKIDRRMG) are enriched in basic and acidic residues. The segment at 1-46 (MSKRESSKYKIDRRMGENIWGRPKSPVNRREYGPGQHGQRRKGKLS) is disordered. The S4 RNA-binding domain occupies 94–157 (SRLDAIVYRA…KQLVTVLEAV (64 aa)).

Belongs to the universal ribosomal protein uS4 family. Part of the 30S ribosomal subunit. Contacts protein S5. The interaction surface between S4 and S5 is involved in control of translational fidelity.

Functionally, one of the primary rRNA binding proteins, it binds directly to 16S rRNA where it nucleates assembly of the body of the 30S subunit. In terms of biological role, with S5 and S12 plays an important role in translational accuracy. In Rhizobium etli (strain CIAT 652), this protein is Small ribosomal subunit protein uS4.